A 183-amino-acid polypeptide reads, in one-letter code: Ribosome-recycling factor (183 aa).

It belongs to the RRF family.

Its subcellular location is the cytoplasm. In terms of biological role, responsible for the release of ribosomes from messenger RNA at the termination of protein biosynthesis. May increase the efficiency of translation by recycling ribosomes from one round of translation to another. The sequence is that of Ribosome-recycling factor from Mycoplasma genitalium (strain ATCC 33530 / DSM 19775 / NCTC 10195 / G37) (Mycoplasmoides genitalium).